The sequence spans 253 residues: GTP cyclohydrolase III (253 aa).

This sequence belongs to the archaeal-type GTP cyclohydrolase family.

The catalysed reaction is GTP + 3 H2O = 2-amino-5-formylamino-6-(5-phospho-D-ribosylamino)pyrimidin-4(3H)-one + 2 phosphate + 2 H(+). Its function is as follows. Catalyzes the formation of 2-amino-5-formylamino-6-ribofuranosylamino-4(3H)-pyrimidinone ribonucleotide monophosphate and inorganic phosphate from GTP. Also has an independent pyrophosphate phosphohydrolase activity. The polypeptide is GTP cyclohydrolase III (Natronomonas pharaonis (strain ATCC 35678 / DSM 2160 / CIP 103997 / JCM 8858 / NBRC 14720 / NCIMB 2260 / Gabara) (Halobacterium pharaonis)).